The primary structure comprises 390 residues: 1-acyl-sn-glycerol-3-phosphate acyltransferase 2 (390 aa).

Residues 2-22 (AMAAAVIVPLGILFFISGLVV) form a helical membrane-spanning segment. Residues 91–96 (HRSDID) carry the HXXXXD motif motif. 2 helical membrane passes run 305 to 325 (LAVV…FLHW) and 333 to 353 (KGIA…QILI). Positions 358–390 (SERSTPAKVAPAKPKDNHQSGPSSQTEVEEKQK) are disordered.

Belongs to the 1-acyl-sn-glycerol-3-phosphate acyltransferase family.

The protein resides in the endoplasmic reticulum membrane. The catalysed reaction is a 1-acyl-sn-glycero-3-phosphate + an acyl-CoA = a 1,2-diacyl-sn-glycero-3-phosphate + CoA. Its pathway is phospholipid metabolism; CDP-diacylglycerol biosynthesis; CDP-diacylglycerol from sn-glycerol 3-phosphate: step 2/3. Its function is as follows. Converts lysophosphatidic acid (LPA) into phosphatidic acid by incorporating acyl moiety at the 2 position. The sequence is that of 1-acyl-sn-glycerol-3-phosphate acyltransferase 2 (LPAT2) from Brassica napus (Rape).